The following is a 349-amino-acid chain: Draxin (349 aa).

The signal sequence occupies residues 1 to 25 (MAASSTFFSPSLFLCVLVLIDITLA). The segment covering 40-53 (NHLQNQETWPQQPR) has biased composition (polar residues). Disordered stretches follow at residues 40–63 (NHLQ…HGLA), 119–166 (PHAE…LYKK), and 246–273 (WPSA…EGEP). Over residues 54–63 (SGHHHKHGLA) the composition is skewed to basic residues. Residues 119–139 (PHAERENQSPGSERGKKQNRE) are compositionally biased toward basic and acidic residues. Composition is skewed to basic residues over residues 140–155 (QRRH…HRGK) and 249–258 (AKKKEKRRSK). Asn264 carries N-linked (GlcNAc...) asparagine glycosylation.

The protein belongs to the draxin family.

Its subcellular location is the secreted. Functionally, chemorepulsive axon guidance protein required for the development of spinal cord and forebrain commissures. Acts as a chemorepulsive guidance protein for commissural axons during development. Able to inhibit or repel neurite outgrowth from dorsal spinal cord and cortical explants in vitro. Binds directly to the neurites and growth cones. The sequence is that of Draxin from Gallus gallus (Chicken).